Consider the following 914-residue polypeptide: Penicillin-binding protein 1A/1B (914 aa).

The segment at 1-29 (MSDQFNSREARRKANSKSSPSPKKGKKRK) is disordered. The Cytoplasmic segment spans residues 1 to 37 (MSDQFNSREARRKANSKSSPSPKKGKKRKKGGLFKKT). Residues 38 to 58 (LFTLLILFVLGVVGGAVTFAV) traverse the membrane as a helical; Signal-anchor for type II membrane protein segment. Residues 59–914 (MVSDAPSLDE…TNSSSIEKTN (856 aa)) lie on the Extracellular side of the membrane. The transglycosylase stretch occupies residues 77 to 246 (STIYDKNGKE…TAYNPVKNPD (170 aa)). The active-site Proton donor; for transglycosylase activity is Glu115. The transpeptidase stretch occupies residues 329-662 (TKAQDKLDEL…PDSVVEATVE (334 aa)). The active-site Acyl-ester intermediate; for transpeptidase activity is Ser390. Residues 708-795 (KLSGLNVKYD…SYEVPKAEDD (88 aa)) form the Fibronectin type-III domain. The interval 773–914 (TAVSDDGKST…TNSSSIEKTN (142 aa)) is disordered. Basic and acidic residues predominate over residues 798–828 (KKDQQQTDDEKQDDEKTQDDTQTDDSQKDDG). Positions 829-840 (QTDQDQTDDSTN) are enriched in acidic residues. 2 stretches are compositionally biased toward low complexity: residues 848–892 (NTNT…GSDT) and 900–914 (SNKTQTNSSSIEKTN).

The protein in the N-terminal section; belongs to the glycosyltransferase 51 family. It in the C-terminal section; belongs to the transpeptidase family. The product expressed from the translation of the ponA gene appears as two bands on a gel (1A and 1B), but the specific amino acid sequence of each protein is unknown. In terms of processing, the N-terminus is blocked.

It localises to the cell membrane. Its subcellular location is the forespore inner membrane. The enzyme catalyses [GlcNAc-(1-&gt;4)-Mur2Ac(oyl-L-Ala-gamma-D-Glu-L-Lys-D-Ala-D-Ala)](n)-di-trans,octa-cis-undecaprenyl diphosphate + beta-D-GlcNAc-(1-&gt;4)-Mur2Ac(oyl-L-Ala-gamma-D-Glu-L-Lys-D-Ala-D-Ala)-di-trans,octa-cis-undecaprenyl diphosphate = [GlcNAc-(1-&gt;4)-Mur2Ac(oyl-L-Ala-gamma-D-Glu-L-Lys-D-Ala-D-Ala)](n+1)-di-trans,octa-cis-undecaprenyl diphosphate + di-trans,octa-cis-undecaprenyl diphosphate + H(+). It catalyses the reaction Preferential cleavage: (Ac)2-L-Lys-D-Ala-|-D-Ala. Also transpeptidation of peptidyl-alanyl moieties that are N-acyl substituents of D-alanine.. It functions in the pathway cell wall biogenesis; peptidoglycan biosynthesis. Its function is as follows. Cell wall formation. Synthesis of cross-linked peptidoglycan from the lipid intermediates. The enzyme has a penicillin-insensitive transglycosylase N-terminal domain (formation of linear glycan strands) and a penicillin-sensitive transpeptidase C-terminal domain (cross-linking of the peptide subunits). Required for vegetative growth. Has a partially redundant function with PBP-2A (pbpA) during spore outgrowth. The sequence is that of Penicillin-binding protein 1A/1B (ponA) from Bacillus subtilis (strain 168).